The sequence spans 60 residues: Phycobilisome degradation protein NblA homolog 2 (60 aa).

It to Synechococcus PCC 7942 NblA and some, to chloroplast ycf18.

This is Phycobilisome degradation protein NblA homolog 2 from Synechocystis sp. (strain ATCC 27184 / PCC 6803 / Kazusa).